A 523-amino-acid polypeptide reads, in one-letter code: ATP synthase subunit alpha (523 aa).

An ATP-binding site is contributed by Gly-179–Thr-186.

Belongs to the ATPase alpha/beta chains family. In terms of assembly, F-type ATPases have 2 components, CF(1) - the catalytic core - and CF(0) - the membrane proton channel. CF(1) has five subunits: alpha(3), beta(3), gamma(1), delta(1), epsilon(1). CF(0) has three main subunits: a(1), b(2) and c(9-12). The alpha and beta chains form an alternating ring which encloses part of the gamma chain. CF(1) is attached to CF(0) by a central stalk formed by the gamma and epsilon chains, while a peripheral stalk is formed by the delta and b chains.

The protein resides in the cell inner membrane. It carries out the reaction ATP + H2O + 4 H(+)(in) = ADP + phosphate + 5 H(+)(out). Functionally, produces ATP from ADP in the presence of a proton gradient across the membrane. The alpha chain is a regulatory subunit. The chain is ATP synthase subunit alpha from Vibrio parahaemolyticus serotype O3:K6 (strain RIMD 2210633).